The primary structure comprises 355 residues: C-X-C chemokine receptor type 1 (355 aa).

At 1-40 the chain is on the extracellular side; sequence MEVNVWNMTDLWTWFEDEFANATGMPPVEKDYSPCLVVTQ. 2 N-linked (GlcNAc...) asparagine glycosylation sites follow: Asn7 and Asn21. The helical transmembrane segment at 41–67 threads the bilayer; sequence TLNKYVVVVIYALVFLLSLLGNSLVML. Residues 68 to 73 lie on the Cytoplasmic side of the membrane; the sequence is VILYSR. Residues 74-92 form a helical membrane-spanning segment; it reads SNRSVTDVYLLNLAMADLL. The Extracellular segment spans residues 93–114; that stretch reads FALTMPIWAVSKEKGWIFGTPL. A helical membrane pass occupies residues 115-138; the sequence is CKVVSLVKEVNFYSGILLLACISV. Cys115 and Cys192 form a disulfide bridge. Residues 139 to 159 are Cytoplasmic-facing; it reads DRYLAIVHATRTLTQKRHLVK. Residues 160 to 184 traverse the membrane as a helical segment; that stretch reads FICLGIWALSLILSLPFFLFRQVFS. Topologically, residues 185-204 are extracellular; that stretch reads PNNSSPVCYEDLGHNTAKWR. Residues 205-232 form a helical membrane-spanning segment; sequence MVLRILPHTFGFILPLLVMLFCYGFTLR. At 233 to 247 the chain is on the cytoplasmic side; the sequence is TLFQAHMGQKHRAMR. The chain crosses the membrane as a helical span at residues 248-270; that stretch reads VIFAVVLIFLLCWLPYNLVLLAD. Topologically, residues 271 to 290 are extracellular; the sequence is TLMRTHVIQETCQRRNDIDR. The chain crosses the membrane as a helical span at residues 291–313; that stretch reads ALDATEILGFLHSCLNPIIYAFI. Residues 314-355 are Cytoplasmic-facing; that stretch reads GQNFRNGFLKMLAARGLISKEFLTRHRVTSYTSSSTNVPSNL.

This sequence belongs to the G-protein coupled receptor 1 family. As to quaternary structure, interacts with IL8. Interacts with GNAI2. In terms of tissue distribution, neutrophils.

It localises to the cell membrane. Its function is as follows. Receptor to interleukin-8, which is a powerful neutrophils chemotactic factor. Binding of IL-8 to the receptor causes activation of neutrophils. This response is mediated via a G-protein that activates a phosphatidylinositol-calcium second messenger system. This Oryctolagus cuniculus (Rabbit) protein is C-X-C chemokine receptor type 1 (CXCR1).